The chain runs to 352 residues: Forkhead box protein D5 (352 aa).

Disordered regions lie at residues 1 to 32 (MSLS…LGED) and 47 to 92 (HSEM…GKAK). Residues 20-32 (SDEEDEIDILGED) are compositionally biased toward acidic residues. The span at 73 to 82 (ESEGGTSKDS) shows a compositional bias: low complexity. Residues 97–191 (KPPYSYIALI…DNGSFLRRRK (95 aa)) constitute a DNA-binding region (fork-head).

As to expression, expression begins in the newly forming dorsal mesoderm and is maintained during gastrulation at the dorsal blastopore lip (Spemann organizer). At the early neurula stages, expressed in a row of cells along the dorsal midline that are destined to become the fllor plate of the neural tube. At late neurula, expressed within the anterior and posterior poles of the embryo. After neural closure, expression is detected only in the tailtip, the otic vesicle and at the midbrain/hindbrain boundary.

It localises to the nucleus. Transcriptional repressor. The protein is Forkhead box protein D5 of Xenopus tropicalis (Western clawed frog).